The sequence spans 112 residues: UPF0375 protein R05A10.4 (112 aa).

The signal sequence occupies residues 1–19 (MNLSIFSAIIFSITIASSA). N-linked (GlcNAc...) asparagine glycosylation occurs at Asn-59.

It belongs to the UPF0375 family.

The protein localises to the secreted. This chain is UPF0375 protein R05A10.4, found in Caenorhabditis elegans.